A 357-amino-acid chain; its full sequence is tRNA-specific 2-thiouridylase MnmA (357 aa).

ATP contacts are provided by residues 10 to 17 and isoleucine 36; that span reads GISGGVDS. The active-site Nucleophile is the cysteine 98. An intrachain disulfide couples cysteine 98 to cysteine 194. Residue glycine 122 participates in ATP binding. An interaction with tRNA region spans residues 144–146; sequence KDQ. Cysteine 194 (cysteine persulfide intermediate) is an active-site residue. Residues 303-304 are interaction with tRNA; it reads RY.

The protein belongs to the MnmA/TRMU family.

It localises to the cytoplasm. The catalysed reaction is S-sulfanyl-L-cysteinyl-[protein] + uridine(34) in tRNA + AH2 + ATP = 2-thiouridine(34) in tRNA + L-cysteinyl-[protein] + A + AMP + diphosphate + H(+). Functionally, catalyzes the 2-thiolation of uridine at the wobble position (U34) of tRNA, leading to the formation of s(2)U34. In Chlorobium phaeovibrioides (strain DSM 265 / 1930) (Prosthecochloris vibrioformis (strain DSM 265)), this protein is tRNA-specific 2-thiouridylase MnmA.